The chain runs to 64 residues: Large ribosomal subunit protein uL29 (64 aa).

This sequence belongs to the universal ribosomal protein uL29 family.

In Solidesulfovibrio magneticus (strain ATCC 700980 / DSM 13731 / RS-1) (Desulfovibrio magneticus), this protein is Large ribosomal subunit protein uL29.